Here is a 136-residue protein sequence, read N- to C-terminus: Large ribosomal subunit protein uL16 (136 aa).

It belongs to the universal ribosomal protein uL16 family. Part of the 50S ribosomal subunit.

Functionally, binds 23S rRNA and is also seen to make contacts with the A and possibly P site tRNAs. The protein is Large ribosomal subunit protein uL16 of Karelsulcia muelleri (strain GWSS) (Sulcia muelleri).